The sequence spans 178 residues: MRITISGLPGSGTTSLTYHLAEMHRLDVISAGEVFRQMARERGLTLAEFGSFCEEDPSVDKLIDERQREIALSNTHIIAEGRLSGWMIQEADLKIWLKASLECRVRRIFDRDQFSDLTAAMQATKEREACEALRYQQYYDIDIGSLSPYHLVLDTEMWTVEQLAIIVSSAIQTLQKSE.

7–15 (GLPGSGTTS) lines the ATP pocket.

Belongs to the cytidylate kinase family. Type 2 subfamily.

Its subcellular location is the cytoplasm. It carries out the reaction CMP + ATP = CDP + ADP. The catalysed reaction is dCMP + ATP = dCDP + ADP. The protein is Cytidylate kinase of Methanospirillum hungatei JF-1 (strain ATCC 27890 / DSM 864 / NBRC 100397 / JF-1).